A 189-amino-acid chain; its full sequence is GMP synthase [glutamine-hydrolyzing] subunit A (189 aa).

In terms of domain architecture, Glutamine amidotransferase type-1 spans 1 to 189; it reads MIVILNNGGQ…CKKCGFEFEE (189 aa). Cys-76 (nucleophile) is an active-site residue. Residues His-163 and Glu-165 contribute to the active site.

In terms of assembly, heterodimer composed of a glutamine amidotransferase subunit (A) and a GMP-binding subunit (B).

It carries out the reaction XMP + L-glutamine + ATP + H2O = GMP + L-glutamate + AMP + diphosphate + 2 H(+). The protein operates within purine metabolism; GMP biosynthesis; GMP from XMP (L-Gln route): step 1/1. Its function is as follows. Catalyzes the synthesis of GMP from XMP. This is GMP synthase [glutamine-hydrolyzing] subunit A from Methanococcus maripaludis (strain C6 / ATCC BAA-1332).